Reading from the N-terminus, the 243-residue chain is uncharacterized protein (243 aa).

Residues 1 to 19 (MDELALSFSLTCLLPENRA) form the signal peptide. Asn-136 carries an N-linked (GlcNAc...) asparagine glycan.

The protein localises to the secreted. This is an uncharacterized protein from Homo sapiens (Human).